A 557-amino-acid polypeptide reads, in one-letter code: Formate--tetrahydrofolate ligase (557 aa).

66 to 73 (TPAGEGKT) contacts ATP.

This sequence belongs to the formate--tetrahydrofolate ligase family.

The enzyme catalyses (6S)-5,6,7,8-tetrahydrofolate + formate + ATP = (6R)-10-formyltetrahydrofolate + ADP + phosphate. The protein operates within one-carbon metabolism; tetrahydrofolate interconversion. This chain is Formate--tetrahydrofolate ligase, found in Bartonella tribocorum (strain CIP 105476 / IBS 506).